A 201-amino-acid polypeptide reads, in one-letter code: Snake venom metalloproteinase trimerelysin-2 (201 aa).

Gln-1 bears the Pyrrolidone carboxylic acid mark. A Peptidase M12B domain is found at 6-201; sequence RYIELAIVVD…YNPQCILNAP (196 aa). N-linked (GlcNAc...) asparagine glycosylation occurs at Asn-72. 3 disulfide bridges follow: Cys-117–Cys-196, Cys-158–Cys-180, and Cys-160–Cys-163. His-142 is a Zn(2+) binding site. Residue Glu-143 is part of the active site. Residues His-146 and His-152 each coordinate Zn(2+).

Belongs to the venom metalloproteinase (M12B) family. P-I subfamily. Monomer. Zn(2+) serves as cofactor. As to expression, expressed by the venom gland.

The protein localises to the secreted. It carries out the reaction Cleavage of 3-Asn-|-Gln-4, 10-His-|-Leu-11 and 14-Ala-|-Leu-15 in the insulin B chain, and the bond Z-Gly-Pro-|-Leu-Gly-Pro in a small molecule substrate of microbial collagenase.. Functionally, major venom non-hemorrhagic metalloproteinase. This is Snake venom metalloproteinase trimerelysin-2 from Protobothrops flavoviridis (Habu).